Here is a 180-residue protein sequence, read N- to C-terminus: Shikimate kinase (180 aa).

14–19 (GAGKSS) contributes to the ATP binding site. Residue Ser18 participates in Mg(2+) binding. Positions 36, 60, and 82 each coordinate substrate. Arg120 is a binding site for ATP. Arg139 lines the substrate pocket.

It belongs to the shikimate kinase family. As to quaternary structure, monomer. The cofactor is Mg(2+).

It is found in the cytoplasm. It carries out the reaction shikimate + ATP = 3-phosphoshikimate + ADP + H(+). It participates in metabolic intermediate biosynthesis; chorismate biosynthesis; chorismate from D-erythrose 4-phosphate and phosphoenolpyruvate: step 5/7. Its function is as follows. Catalyzes the specific phosphorylation of the 3-hydroxyl group of shikimic acid using ATP as a cosubstrate. This is Shikimate kinase from Xylella fastidiosa (strain M12).